The sequence spans 1124 residues: PAN2-PAN3 deadenylation complex catalytic subunit PAN2 (1124 aa).

4 WD repeats span residues 19-58, 118-157, 158-195, and 309-348; these read IDNS…IPMP, PGFN…TTSF, NHTG…TVKS, and SSNT…SKNF. Residues 351–484 are linker; the sequence is FPSYLEQPDF…EYKLSNKFEV (134 aa). The USP domain occupies 484-861; sequence VPNCYSNLKI…KPIIVMYQLA (378 aa). The 175-residue stretch at 917-1091 folds into the Exonuclease domain; sequence IAIDAEFVAL…EDANTALLLY (175 aa). A divalent metal cation contacts are provided by D920, E922, D1030, and D1083.

Belongs to the peptidase C19 family. PAN2 subfamily. As to quaternary structure, forms a heterotrimer with an asymmetric homodimer of the regulatory subunit PAN3 to form the poly(A)-nuclease (PAN) deadenylation complex. It depends on a divalent metal cation as a cofactor.

It is found in the cytoplasm. The catalysed reaction is Exonucleolytic cleavage of poly(A) to 5'-AMP.. Its activity is regulated as follows. Positively regulated by the regulatory subunit PAN3. Functionally, catalytic subunit of the poly(A)-nuclease (PAN) deadenylation complex, one of two cytoplasmic mRNA deadenylases involved in mRNA turnover. PAN specifically shortens poly(A) tails of RNA and the activity is stimulated by poly(A)-binding protein PAB1. PAN deadenylation is followed by rapid degradation of the shortened mRNA tails by the CCR4-NOT complex. Deadenylated mRNAs are then degraded by two alternative mechanisms, namely exosome-mediated 3'-5' exonucleolytic degradation, or deadenylation-dependent mRNA decaping and subsequent 5'-3' exonucleolytic degradation by XRN1. May also be involved in post-transcriptional maturation of mRNA poly(A) tails. This is PAN2-PAN3 deadenylation complex catalytic subunit PAN2 from Debaryomyces hansenii (strain ATCC 36239 / CBS 767 / BCRC 21394 / JCM 1990 / NBRC 0083 / IGC 2968) (Yeast).